We begin with the raw amino-acid sequence, 149 residues long: Angiogenin (149 aa).

Residues 1–24 (MVMGLGPLVLIFVLGLGVTPPTLA) form the signal peptide. The residue at position 25 (glutamine 25) is a Pyrrolidone carboxylic acid. Histidine 37 serves as the catalytic Proton acceptor. TRNA is bound at residue arginine 45. Intrachain disulfides connect cysteine 50-cysteine 105, cysteine 63-cysteine 116, and cysteine 81-cysteine 131. Positions 55–59 (KRRDL) match the Nucleolar localization signal motif. Cysteine 105 and isoleucine 127 together coordinate tRNA. The active-site Proton donor is histidine 138.

It belongs to the pancreatic ribonuclease family. Homodimer. Interacts with RNH1; inhibiting ANG ribonuclease activity. Interacts with PCNA.

Its subcellular location is the secreted. The protein resides in the nucleus. It localises to the nucleolus. It is found in the cytoplasm. The protein localises to the stress granule. Has weak tRNA ribonuclease activity by itself due to partial autoinhibition by its C-terminus, which folds into a short alpha-helix that partially occludes the substrate-binding site. In absence of stress, the ribonuclease activity is inhibited by RNH1 in the cytoplasm. In response to stress, dissociates from RNH1 in the cytoplasm and associates with cytoplasmic ribosomes with vacant A-sites: ribosomes directly activate the tRNA ribonuclease activity of ANG by refolding the C-terminal alpha-helix. In response to stress, the angiogenic activity of ANG is inhibited by RNH1 in the nucleus. In terms of biological role, secreted ribonuclease that can either promote or restrict cell proliferation of target cells, depending on the context. Endocytosed in target cells via its receptor PLXNB2 and translocates to the cytoplasm or nucleus. Under stress conditions, localizes to the cytoplasm and promotes the assembly of stress granules (SGs): specifically cleaves a subset of tRNAs within anticodon loops to produce tRNA-derived stress-induced fragments (tiRNAs), resulting in translation repression and inhibition of cell proliferation. tiRNas also prevent formation of apoptosome, thereby promoting cell survival. Preferentially cleaves RNAs between a pyrimidine and an adenosine residue, suggesting that it cleaves the anticodon loop of tRNA(Ala) (32-UUAGCAU-38) after positions 33 and 36. Cleaves a subset of tRNAs, including tRNA(Ala), tRNA(Glu), tRNA(Gly), tRNA(Lys), tRNA(Val), tRNA(His), tRNA(Asp) and tRNA(Sec). Under growth conditions and in differentiated cells, translocates to the nucleus and stimulates ribosomal RNA (rRNA) transcription, including that containing the initiation site sequences of 45S rRNA, thereby promoting cell growth and proliferation. Angiogenin induces vascularization of normal and malignant tissues via its ability to promote rRNA transcription. Involved in hematopoietic stem and progenitor cell (HSPC) growth and survival by promoting rRNA transcription in growth conditions and inhibiting translation in response to stress, respectively. Mediates the crosstalk between myeloid and intestinal epithelial cells to protect the intestinal epithelial barrier integrity: secreted by myeloid cells and promotes intestinal epithelial cells proliferation and survival. Also mediates osteoclast-endothelial cell crosstalk in growing bone: produced by osteoclasts and protects the neighboring vascular cells against senescence by promoting rRNA transcription. This Oryctolagus cuniculus (Rabbit) protein is Angiogenin (ANG).